We begin with the raw amino-acid sequence, 455 residues long: Kynureninase (455 aa).

Pyridoxal 5'-phosphate-binding positions include Leu94, Thr95, 122 to 125 (FPSD), Asp208, His211, and Tyr233. Position 234 is an N6-(pyridoxal phosphate)lysine (Lys234). Residues Trp275 and Asn303 each contribute to the pyridoxal 5'-phosphate site.

Belongs to the kynureninase family. As to quaternary structure, homodimer. It depends on pyridoxal 5'-phosphate as a cofactor.

It is found in the cytoplasm. The enzyme catalyses L-kynurenine + H2O = anthranilate + L-alanine + H(+). It carries out the reaction 3-hydroxy-L-kynurenine + H2O = 3-hydroxyanthranilate + L-alanine + H(+). Its pathway is amino-acid degradation; L-kynurenine degradation; L-alanine and anthranilate from L-kynurenine: step 1/1. The protein operates within cofactor biosynthesis; NAD(+) biosynthesis; quinolinate from L-kynurenine: step 2/3. Catalyzes the cleavage of L-kynurenine (L-Kyn) and L-3-hydroxykynurenine (L-3OHKyn) into anthranilic acid (AA) and 3-hydroxyanthranilic acid (3-OHAA), respectively. This Vanderwaltozyma polyspora (strain ATCC 22028 / DSM 70294 / BCRC 21397 / CBS 2163 / NBRC 10782 / NRRL Y-8283 / UCD 57-17) (Kluyveromyces polysporus) protein is Kynureninase.